Consider the following 219-residue polypeptide: Ribose-5-phosphate isomerase A (219 aa).

Substrate is bound by residues T28–T31, D81–D84, and K94–G97. The active-site Proton acceptor is the E103. K121 serves as a coordination point for substrate.

It belongs to the ribose 5-phosphate isomerase family. As to quaternary structure, homodimer.

The catalysed reaction is aldehydo-D-ribose 5-phosphate = D-ribulose 5-phosphate. It functions in the pathway carbohydrate degradation; pentose phosphate pathway; D-ribose 5-phosphate from D-ribulose 5-phosphate (non-oxidative stage): step 1/1. Catalyzes the reversible conversion of ribose-5-phosphate to ribulose 5-phosphate. The sequence is that of Ribose-5-phosphate isomerase A from Nitrosomonas europaea (strain ATCC 19718 / CIP 103999 / KCTC 2705 / NBRC 14298).